The primary structure comprises 128 residues: Fluoride-specific ion channel FluC (128 aa).

4 helical membrane passes run 4–24 (VFLL…VSTW), 35–55 (FGIL…WSIA), 67–87 (FLFT…LDTM), and 99–119 (LLNV…GIIL). Na(+) contacts are provided by Gly-74 and Thr-77.

It belongs to the fluoride channel Fluc/FEX (TC 1.A.43) family.

Its subcellular location is the cell inner membrane. The catalysed reaction is fluoride(in) = fluoride(out). Na(+) is not transported, but it plays an essential structural role and its presence is essential for fluoride channel function. Functionally, fluoride-specific ion channel. Important for reducing fluoride concentration in the cell, thus reducing its toxicity. The sequence is that of Fluoride-specific ion channel FluC from Parabacteroides distasonis (strain ATCC 8503 / DSM 20701 / CIP 104284 / JCM 5825 / NCTC 11152).